The primary structure comprises 377 residues: Probable G-protein coupled receptor F27E5.8 (377 aa).

Residues 1–34 lie on the Extracellular side of the membrane; sequence MSEQDSSSPKYMRFLLGNFTSAEMVTDGNFLIYC. N-linked (GlcNAc...) asparagine glycosylation is present at N18. The chain crosses the membrane as a helical span at residues 35-55; that stretch reads IEMGLLVIGVLENIFMIGAVF. Residues 56 to 71 are Cytoplasmic-facing; sequence STSCLHLNLRILICNC. Residues 72–92 form a helical membrane-spanning segment; the sequence is CLGFILMAVGRAMIAVPLCIA. Over 93-105 the chain is Extracellular; it reads HLRDVDISSHAWC. The chain crosses the membrane as a helical span at residues 106 to 126; sequence FIANAVHHSSADSVCLSFVFI. Residues 127–144 are Cytoplasmic-facing; that stretch reads MLERTAGTIWSKDYEKTK. A helical membrane pass occupies residues 145 to 165; it reads IHIFPCIFAFLQWFIPMFMIL. At 166–195 the chain is on the extracellular side; the sequence is GNFLDRANRMEHFLLYPHLPCQIEYLTPTM. A helical transmembrane segment spans residues 196 to 216; sequence FMITIFIIVIGFIASVGGITI. Residues 217-251 lie on the Cytoplasmic side of the membrane; that stretch reads VYNKNIKKYNTRDIWFNTVNLSERYQITENIRSTH. A helical transmembrane segment spans residues 252-272; the sequence is LLFPLLALMLIFSTLSVSVLI. Topologically, residues 273–303 are extracellular; that stretch reads YGGYWVSVMTKEPARFEEVVKWFGRGGEAAQ. The helical transmembrane segment at 304–324 threads the bilayer; the sequence is LFDIITAIYTISFPICAFICH. The Cytoplasmic portion of the chain corresponds to 325-377; sequence PNLFRFLRKFIGWNSYAVRPSNLNEIGGFEMSTAPIRTQTEFHFQELSRQWNT.

It belongs to the G-protein coupled receptor 1 family.

It localises to the cell membrane. This Caenorhabditis elegans protein is Probable G-protein coupled receptor F27E5.8.